The chain runs to 1187 residues: DNA-directed RNA polymerase subunit beta (1187 aa).

The disordered stretch occupies residues 1150-1187; that stretch reads KDEDDDPASSADDLGFNIGARPDAAAKEDQKAEEPEYQ. Positions 1173–1187 are enriched in basic and acidic residues; it reads AAAKEDQKAEEPEYQ.

Belongs to the RNA polymerase beta chain family. The RNAP catalytic core consists of 2 alpha, 1 beta, 1 beta' and 1 omega subunit. When a sigma factor is associated with the core the holoenzyme is formed, which can initiate transcription.

The enzyme catalyses RNA(n) + a ribonucleoside 5'-triphosphate = RNA(n+1) + diphosphate. Functionally, DNA-dependent RNA polymerase catalyzes the transcription of DNA into RNA using the four ribonucleoside triphosphates as substrates. The protein is DNA-directed RNA polymerase subunit beta of Bifidobacterium longum (strain DJO10A).